We begin with the raw amino-acid sequence, 370 residues long: Probable neutral protease 2 homolog TRV_02539 (370 aa).

The first 19 residues, 1-19 (MQLVAALAALGALVAPAVA), serve as a signal peptide directing secretion. A propeptide spanning residues 20-188 (YPHAPMNETL…SIHSRALQKR (169 aa)) is cleaved from the precursor. 2 cysteine pairs are disulfide-bonded: Cys196–Cys267 and Cys274–Cys292. His316 provides a ligand contact to Zn(2+). Residue Glu317 is part of the active site. His320 and Asp331 together coordinate Zn(2+).

This sequence belongs to the peptidase M35 family. It depends on Zn(2+) as a cofactor.

The protein resides in the secreted. The catalysed reaction is Preferential cleavage of bonds with hydrophobic residues in P1'. Also 3-Asn-|-Gln-4 and 8-Gly-|-Ser-9 bonds in insulin B chain.. Its function is as follows. Probable secreted metalloprotease that shows high activities on basic nuclear substrates such as histone and protamine. May be involved in virulence. This is Probable neutral protease 2 homolog TRV_02539 from Trichophyton verrucosum (strain HKI 0517).